An 82-amino-acid polypeptide reads, in one-letter code: Delta-ctenitoxin-Pn2a (82 aa).

The first 17 residues, 1–17, serve as a signal peptide directing secretion; it reads MKVAILFLSILVLAVAS. Positions 18 to 34 are excised as a propeptide; the sequence is ESIEESRDDFAVEELGR. 5 cysteine pairs are disulfide-bonded: Cys37/Cys51, Cys44/Cys57, Cys48/Cys80, Cys50/Cys65, and Cys59/Cys63.

This sequence belongs to the neurotoxin 03 (Tx2) family. 06 subfamily. Expressed by the venom gland.

Its subcellular location is the secreted. In terms of biological role, toxin that is known to potentiate erectile function. It binds voltage-dependently to sodium channels (Nav), inhibits the inactivation of the activated channels and decreases the peak inward current. The toxin delays inactivation of Nav1.2/SCN2A, Nav1.3/SCN3A, Nav1.4/SCN4A and Nav1.8/SCN10A, slows the inactivation process and decreases the sodium peak amplitude of Nav1.5/SCN5A and Nav1.6/SCN8A. In vivo, it enhances erectile function by inducing the release of nictric oxide (NO): it slows the sodium current, leading to depolarization, which leads to an increase in calcium influx (probably via activation of N-type calcium channels) which in turn activates neuronal NO synthase (nNOS/NOS1), inducing nitric oxide (NO) production. In a final step, NO activates soluble guanylate cyclase (GUCY1A1/GUCY1B1) which in turn increases cGMP formation, resulting in penile erection. It is noteworthy that the toxin does not provoke erection by inhibiting phosphodiesterase type 5 (PDE5A), an enzyme that hydrolysis cGMP. In vivo, it also causes scratching, lacrimation, hypersalivation, sweating and agitation followed by spastic paralysis of the anterior and posterior extremities and death at dose levels of 0.79 mg/mouse. It is insecticidal to the larval and adult forms of the house fly. The toxin also improves cavernosal relaxation in different models where erectile dysfunction is observed, such as deoxycorticosterone-acetate (DOCA)-salt hypertensive rats, mice models for type-1 diabetes, as well as elderly rats. The protein is Delta-ctenitoxin-Pn2a of Phoneutria nigriventer (Brazilian armed spider).